Here is a 46-residue protein sequence, read N- to C-terminus: Transcriptional regulator SEHBP (46 aa).

Interacts with histone H2B. Also interacts with chromatin-binding proteins HMGN1 and HMGN3.

It is found in the nucleus. It localises to the cytoplasm. Functionally, plays a role in transcription regulation. The polypeptide is Transcriptional regulator SEHBP (Homo sapiens (Human)).